Reading from the N-terminus, the 257-residue chain is Acetylglutamate kinase (257 aa).

Residues 41–42 (GG), arginine 63, and asparagine 155 each bind substrate.

This sequence belongs to the acetylglutamate kinase family. ArgB subfamily.

The protein localises to the cytoplasm. The catalysed reaction is N-acetyl-L-glutamate + ATP = N-acetyl-L-glutamyl 5-phosphate + ADP. Its pathway is amino-acid biosynthesis; L-arginine biosynthesis; N(2)-acetyl-L-ornithine from L-glutamate: step 2/4. Its function is as follows. Catalyzes the ATP-dependent phosphorylation of N-acetyl-L-glutamate. The sequence is that of Acetylglutamate kinase from Solibacter usitatus (strain Ellin6076).